A 235-amino-acid polypeptide reads, in one-letter code: Thiopurine S-methyltransferase (235 aa).

Residues Trp13, Leu48, Glu69, and Arg126 each coordinate S-adenosyl-L-methionine. The disordered stretch occupies residues 199–235 (PDPQNGAPRRVEHKVYQLTGKRPASPEADGRAAETED). The span at 226-235 (ADGRAAETED) shows a compositional bias: basic and acidic residues.

Belongs to the class I-like SAM-binding methyltransferase superfamily. TPMT family.

It is found in the cytoplasm. The enzyme catalyses S-adenosyl-L-methionine + a thiopurine = S-adenosyl-L-homocysteine + a thiopurine S-methylether.. The sequence is that of Thiopurine S-methyltransferase from Stutzerimonas stutzeri (strain A1501) (Pseudomonas stutzeri).